Consider the following 132-residue polypeptide: MTEGTATIRTRKFMTNRLLARKQMVCDVLHPGKPTVSKTEIREKLAKMYKVTPDVVFVFGFKTNFGGGKSTGFALIYDTLDLAKKFEPKHRLARHGLYEKKRPTRKQRKERKNRMKKVRGTKKSKVGAAAKK.

Positions 92-101 (LARHGLYEKK) are enriched in basic and acidic residues. The tract at residues 92-132 (LARHGLYEKKRPTRKQRKERKNRMKKVRGTKKSKVGAAAKK) is disordered. Over residues 102-132 (RPTRKQRKERKNRMKKVRGTKKSKVGAAAKK) the composition is skewed to basic residues.

Belongs to the eukaryotic ribosomal protein eS24 family.

This Spodoptera frugiperda (Fall armyworm) protein is Small ribosomal subunit protein eS24 (RpS24).